The sequence spans 179 residues: Probable inosine/xanthosine triphosphatase (179 aa).

Position 13–18 (13–18 (STNPVK)) interacts with substrate. Position 70 (Gln70) interacts with Mg(2+).

The protein belongs to the YjjX NTPase family. Homodimer. Mg(2+) is required as a cofactor. Requires Mn(2+) as cofactor.

The catalysed reaction is XTP + H2O = XDP + phosphate + H(+). It carries out the reaction ITP + H2O = IDP + phosphate + H(+). Phosphatase that hydrolyzes non-canonical purine nucleotides such as XTP and ITP to their respective diphosphate derivatives. Probably excludes non-canonical purines from DNA/RNA precursor pool, thus preventing their incorporation into DNA/RNA and avoiding chromosomal lesions. This is Probable inosine/xanthosine triphosphatase from Methanocaldococcus jannaschii (strain ATCC 43067 / DSM 2661 / JAL-1 / JCM 10045 / NBRC 100440) (Methanococcus jannaschii).